The following is a 670-amino-acid chain: Methionine--tRNA ligase (670 aa).

A 'HIGH' region motif is present at residues Pro14–His24. Zn(2+) contacts are provided by Cys145, Cys148, Cys158, and Cys161. The short motif at Lys330–Ser334 is the 'KMSKS' region element. Lys333 serves as a coordination point for ATP. A tRNA-binding domain is found at Asp570–Lys670.

This sequence belongs to the class-I aminoacyl-tRNA synthetase family. MetG type 1 subfamily. As to quaternary structure, homodimer. Requires Zn(2+) as cofactor.

Its subcellular location is the cytoplasm. It carries out the reaction tRNA(Met) + L-methionine + ATP = L-methionyl-tRNA(Met) + AMP + diphosphate. In terms of biological role, is required not only for elongation of protein synthesis but also for the initiation of all mRNA translation through initiator tRNA(fMet) aminoacylation. This is Methionine--tRNA ligase from Legionella pneumophila (strain Corby).